Reading from the N-terminus, the 362-residue chain is Protein mab-21-like 3 (362 aa).

Belongs to the mab-21 family.

This is Protein mab-21-like 3 (MAB21L3) from Homo sapiens (Human).